A 64-amino-acid polypeptide reads, in one-letter code: U6-theraphotoxin-Cg1a (64 aa).

A signal peptide spans 1-20 (MTRKILAVLLVFTLVACNNA). Positions 21–38 (EKYSETDVEDSPMIQERR) are excised as a propeptide. 3 disulfides stabilise this stretch: C39–C55, C46–C58, and C54–C63.

It belongs to the neurotoxin 36 family. 02 subfamily. As to expression, expressed by the venom gland.

It is found in the secreted. Functionally, probable ion channel inhibitor. The polypeptide is U6-theraphotoxin-Cg1a (Chilobrachys guangxiensis (Chinese earth tiger tarantula)).